Consider the following 337-residue polypeptide: Inositol 2-dehydrogenase (337 aa).

It belongs to the Gfo/Idh/MocA family. As to quaternary structure, homotetramer.

The catalysed reaction is myo-inositol + NAD(+) = scyllo-inosose + NADH + H(+). Its function is as follows. Involved in the oxidation of myo-inositol (MI) to 2-keto-myo-inositol (2KMI or 2-inosose). In Klebsiella pneumoniae (strain 342), this protein is Inositol 2-dehydrogenase.